Here is a 453-residue protein sequence, read N- to C-terminus: Bifunctional protein GlmU (453 aa).

Positions 1–231 (MERSSLAVIL…EKELTGCNNR (231 aa)) are pyrophosphorylase. UDP-N-acetyl-alpha-D-glucosamine contacts are provided by residues 10–13 (LAAG), Lys24, Gln77, 82–83 (GT), 105–107 (YGD), Gly143, Glu157, Asn172, and Asn229. Asp107 lines the Mg(2+) pocket. Asn229 is a Mg(2+) binding site. The linker stretch occupies residues 232–252 (AELAFIERLWQERRRHELMVD). The N-acetyltransferase stretch occupies residues 253–453 (GVSMIAPETV…AQKEAKKKSS (201 aa)). 2 residues coordinate UDP-N-acetyl-alpha-D-glucosamine: Arg318 and Lys336. Residue His348 is the Proton acceptor of the active site. Residues Tyr351 and Asn362 each contribute to the UDP-N-acetyl-alpha-D-glucosamine site. Residues Ala365, 371 to 372 (NY), Ser390, Ser408, and Arg425 each bind acetyl-CoA.

The protein in the N-terminal section; belongs to the N-acetylglucosamine-1-phosphate uridyltransferase family. This sequence in the C-terminal section; belongs to the transferase hexapeptide repeat family. Homotrimer. Requires Mg(2+) as cofactor.

The protein resides in the cytoplasm. The catalysed reaction is alpha-D-glucosamine 1-phosphate + acetyl-CoA = N-acetyl-alpha-D-glucosamine 1-phosphate + CoA + H(+). The enzyme catalyses N-acetyl-alpha-D-glucosamine 1-phosphate + UTP + H(+) = UDP-N-acetyl-alpha-D-glucosamine + diphosphate. Its pathway is nucleotide-sugar biosynthesis; UDP-N-acetyl-alpha-D-glucosamine biosynthesis; N-acetyl-alpha-D-glucosamine 1-phosphate from alpha-D-glucosamine 6-phosphate (route II): step 2/2. The protein operates within nucleotide-sugar biosynthesis; UDP-N-acetyl-alpha-D-glucosamine biosynthesis; UDP-N-acetyl-alpha-D-glucosamine from N-acetyl-alpha-D-glucosamine 1-phosphate: step 1/1. It functions in the pathway bacterial outer membrane biogenesis; LPS lipid A biosynthesis. In terms of biological role, catalyzes the last two sequential reactions in the de novo biosynthetic pathway for UDP-N-acetylglucosamine (UDP-GlcNAc). The C-terminal domain catalyzes the transfer of acetyl group from acetyl coenzyme A to glucosamine-1-phosphate (GlcN-1-P) to produce N-acetylglucosamine-1-phosphate (GlcNAc-1-P), which is converted into UDP-GlcNAc by the transfer of uridine 5-monophosphate (from uridine 5-triphosphate), a reaction catalyzed by the N-terminal domain. In Agrobacterium fabrum (strain C58 / ATCC 33970) (Agrobacterium tumefaciens (strain C58)), this protein is Bifunctional protein GlmU.